Here is a 641-residue protein sequence, read N- to C-terminus: MIFLKNICKNIGENAILKNVSLSIEKGEFVAIIGQSGSGKTSLLNIIGTLDTPSSGTYVFDEYEVTKLNNDEKARLRREKIGFIFQRYNLLSLLSAKENVSLPAVYAGKNLQERSQNAKKLLNDLELAHKLDSKPNELSGGQQQRVSIARALINGGELILADEPTGALDSKSGIMVLEILQKLNEQGHTIVLVTHDPKIAAQAKRVIEIKDGEILSDTKKEKAQEKLILKTMPKEKKTLTLLKNQAFECFKIAYSSILAHKLRSILTMLGIIIGIASVVCVVALGLGSQAKVLESIARLGTNTIEIRPGKGFGDLRSGKTRLNFSDLETLRSLEYLEAVDAHSNTSGVATYTNISLSARAEGVGVNNFAIEGLRIDAGRILNNDDVKNSTNVAVLDFNAKKNLFPDEKSENILGRVVLFNSQPFKIIGVLQKDTDKPIEDNVVRFYIPYTTLMNKLTGDRNLREIIVKVKDDVSSTLAENAIIRILEIKRGQKDFFTFNSDTFKQAITANKRTTTILTACVAVIALIVGGIGVMNIMLVSVSERTREIGIRMAIGARREDIMMQFLIEAVMICTIGAILGVILSIFVIFAFNTLSTDFPMILNAYSVLLGLLSSMFIGVVFGFFPARNAANLNPISALSKE.

An ABC transporter domain is found at isoleucine 2 to lysine 236. Residue glycine 34–threonine 41 participates in ATP binding. A run of 4 helical transmembrane segments spans residues isoleucine 265–glycine 285, alanine 519–valine 539, methionine 571–phenylalanine 591, and alanine 604–phenylalanine 624.

The protein belongs to the ABC transporter superfamily. Macrolide exporter (TC 3.A.1.122) family. Homodimer.

Its subcellular location is the cell inner membrane. Functionally, non-canonical ABC transporter that contains transmembrane domains (TMD), which form a pore in the inner membrane, and an ATP-binding domain (NBD), which is responsible for energy generation. Confers resistance against macrolides. The sequence is that of Macrolide export ATP-binding/permease protein MacB from Campylobacter jejuni subsp. jejuni serotype O:2 (strain ATCC 700819 / NCTC 11168).